A 216-amino-acid chain; its full sequence is MANILENQLFTAAKTIEQQLDQQLDRLDNLDSDDLKVLREQRLREMKDLNNKKQEWLRNGHGTYTELADEKEFFEMSKKSPNIVCHFYRDSTERCKIVDMHLKILAAKHVEAKFCKVNAEKTPFLTQRLRIKVIPTIALVKDSKTKDFIVGFTDLGNCDDFATEMLEWRIAHSGAIDYKGDLMQPPDVKRKPFINRPQKTIRGGYDSDDSDIDLDD.

A coiled-coil region spans residues 13–59 (AKTIEQQLDQQLDRLDNLDSDDLKVLREQRLREMKDLNNKKQEWLRN). Residues 29-163 (NLDSDDLKVL…DLGNCDDFAT (135 aa)) enclose the Phosducin domain.

This sequence belongs to the phosducin family. Highly expressed in germline cells of the testis from the spermatogonia stage until the early spermatid stage but is no longer observed in late-stage spermatids in the distal end of the testis.

The catalysed reaction is [thioredoxin]-dithiol + NADP(+) = [thioredoxin]-disulfide + NADPH + H(+). Functionally, has redox activity with thioredoxin. Required for male fertility and maturation of sperm past the canoe stage during spermiogenesis. The chain is Phosducin-like protein 3 from Drosophila melanogaster (Fruit fly).